The following is a 389-amino-acid chain: Flagellar P-ring protein (389 aa).

The signal sequence occupies residues 1-33 (MRPLVAARRRAAACCALAACMLALAFAPAAARA).

The protein belongs to the FlgI family. In terms of assembly, the basal body constitutes a major portion of the flagellar organelle and consists of four rings (L,P,S, and M) mounted on a central rod.

The protein localises to the periplasm. It localises to the bacterial flagellum basal body. In terms of biological role, assembles around the rod to form the L-ring and probably protects the motor/basal body from shearing forces during rotation. This chain is Flagellar P-ring protein, found in Burkholderia pseudomallei (strain K96243).